The primary structure comprises 401 residues: Phosphoglycerate kinase (401 aa).

Substrate-binding positions include 21-23 (DFN), arginine 36, 59-62 (HLGR), arginine 119, and arginine 160. Residues lysine 212, glutamate 330, and 357-360 (GGDS) each bind ATP.

The protein belongs to the phosphoglycerate kinase family. In terms of assembly, monomer.

It is found in the cytoplasm. The enzyme catalyses (2R)-3-phosphoglycerate + ATP = (2R)-3-phospho-glyceroyl phosphate + ADP. Its pathway is carbohydrate degradation; glycolysis; pyruvate from D-glyceraldehyde 3-phosphate: step 2/5. This Limosilactobacillus reuteri subsp. reuteri (strain JCM 1112) (Lactobacillus reuteri) protein is Phosphoglycerate kinase.